Consider the following 120-residue polypeptide: uncharacterized protein (120 aa).

The next 4 membrane-spanning stretches (helical) occupy residues 9–29 (WPDFLSVVLLALLLWISLFCG), 32–52 (ALMFCCASVFSVALCVAADCL), 68–88 (FVWPLTWLGSLSGLGLAVMAT), and 94–114 (GPEHVIWALAGLLTFWLSFRF).

Its subcellular location is the membrane. This is an uncharacterized protein from Escherichia phage Mu (Bacteriophage Mu).